The chain runs to 136 residues: Nucleoside diphosphate kinase (136 aa).

The ATP site is built by K10, F58, R86, T92, R104, and N114. Catalysis depends on H117, which acts as the Pros-phosphohistidine intermediate.

It belongs to the NDK family. As to quaternary structure, homotetramer. Mg(2+) serves as cofactor.

The protein resides in the cytoplasm. The enzyme catalyses a 2'-deoxyribonucleoside 5'-diphosphate + ATP = a 2'-deoxyribonucleoside 5'-triphosphate + ADP. It catalyses the reaction a ribonucleoside 5'-diphosphate + ATP = a ribonucleoside 5'-triphosphate + ADP. Functionally, major role in the synthesis of nucleoside triphosphates other than ATP. The ATP gamma phosphate is transferred to the NDP beta phosphate via a ping-pong mechanism, using a phosphorylated active-site intermediate. The protein is Nucleoside diphosphate kinase of Mycobacterium ulcerans (strain Agy99).